Here is a 232-residue protein sequence, read N- to C-terminus: 2-C-methyl-D-erythritol 4-phosphate cytidylyltransferase (232 aa).

The protein belongs to the IspD/TarI cytidylyltransferase family. IspD subfamily.

The enzyme catalyses 2-C-methyl-D-erythritol 4-phosphate + CTP + H(+) = 4-CDP-2-C-methyl-D-erythritol + diphosphate. It functions in the pathway isoprenoid biosynthesis; isopentenyl diphosphate biosynthesis via DXP pathway; isopentenyl diphosphate from 1-deoxy-D-xylulose 5-phosphate: step 2/6. Catalyzes the formation of 4-diphosphocytidyl-2-C-methyl-D-erythritol from CTP and 2-C-methyl-D-erythritol 4-phosphate (MEP). The chain is 2-C-methyl-D-erythritol 4-phosphate cytidylyltransferase from Rhodococcus erythropolis (strain PR4 / NBRC 100887).